Here is a 176-residue protein sequence, read N- to C-terminus: ATP synthase subunit delta (176 aa).

Belongs to the ATPase delta chain family. As to quaternary structure, F-type ATPases have 2 components, F(1) - the catalytic core - and F(0) - the membrane proton channel. F(1) has five subunits: alpha(3), beta(3), gamma(1), delta(1), epsilon(1). F(0) has three main subunits: a(1), b(2) and c(10-14). The alpha and beta chains form an alternating ring which encloses part of the gamma chain. F(1) is attached to F(0) by a central stalk formed by the gamma and epsilon chains, while a peripheral stalk is formed by the delta and b chains.

Its subcellular location is the cell membrane. Functionally, f(1)F(0) ATP synthase produces ATP from ADP in the presence of a proton or sodium gradient. F-type ATPases consist of two structural domains, F(1) containing the extramembraneous catalytic core and F(0) containing the membrane proton channel, linked together by a central stalk and a peripheral stalk. During catalysis, ATP synthesis in the catalytic domain of F(1) is coupled via a rotary mechanism of the central stalk subunits to proton translocation. In terms of biological role, this protein is part of the stalk that links CF(0) to CF(1). It either transmits conformational changes from CF(0) to CF(1) or is implicated in proton conduction. This Hamiltonella defensa subsp. Acyrthosiphon pisum (strain 5AT) protein is ATP synthase subunit delta.